The chain runs to 234 residues: 2-amino-5-formylamino-6-ribosylaminopyrimidin-4(3H)-one 5'-monophosphate deformylase (234 aa).

4 residues coordinate Fe cation: Glu30, His32, Asp41, and His111.

Belongs to the creatininase superfamily. FAPy deformylase family. In terms of assembly, homodimer. Requires Fe(2+) as cofactor. Zn(2+) serves as cofactor.

The catalysed reaction is 2-amino-5-formylamino-6-(5-phospho-D-ribosylamino)pyrimidin-4(3H)-one + H2O = 2,5-diamino-6-(1-D-ribosylamino)pyrimidin-4(3H)-one 5'-phosphate + formate + H(+). The protein operates within cofactor biosynthesis; coenzyme F420 biosynthesis. It functions in the pathway cofactor biosynthesis; riboflavin biosynthesis. Its function is as follows. Catalyzes the hydrolysis of the formamide of 2-amino-5-formylamino-6-ribosylamino-4(3H)-pyrimidinone 5'-monophosphate (FAPy) to form 2,5-diamino-6-ribosylamino-4(3H)-pyrimidinone 5'-phosphate (APy). This chain is 2-amino-5-formylamino-6-ribosylaminopyrimidin-4(3H)-one 5'-monophosphate deformylase, found in Methanothermobacter thermautotrophicus (strain ATCC 29096 / DSM 1053 / JCM 10044 / NBRC 100330 / Delta H) (Methanobacterium thermoautotrophicum).